We begin with the raw amino-acid sequence, 430 residues long: Probable GPI-anchored adhesin-like protein PGA32 (430 aa).

The signal sequence occupies residues 1–16 (MKVSTLIIVSIPIVSG). Disordered regions lie at residues 88–195 (LGQV…TVIN), 232–257 (IASASASSGSSTKDNDSDSSSARGIK), 278–302 (GGNGSGSNTNSYKNHSTTSTTSKYF), and 314–336 (SKSIYSNSTTSRSSLSVSSSSTD). Low complexity-rich tracts occupy residues 92–112 (TTPSRTSTTTTTSNPIAPTTS) and 122–135 (TDTAPTTTTTTNAR). Over residues 141–167 (TPVTVSGDNVLTLFGNPNLSTGNDQSN) the composition is skewed to polar residues. Low complexity-rich tracts occupy residues 168–187 (SVSKTTAETTTTSSAPSSSS) and 233–253 (ASASASSGSSTKDNDSDSSSA). Positions 289–302 (YKNHSTTSTTSKYF) are enriched in polar residues. Residues 314–335 (SKSIYSNSTTSRSSLSVSSSST) are compositionally biased toward low complexity. Gly401 carries GPI-anchor amidated glycine lipidation. A propeptide spans 402–430 (DGNKLIGGNKYLISFMWTNLILTMIMLFT) (removed in mature form).

The protein localises to the cell membrane. In terms of biological role, putative adhesin which is involved in cell adhesion and virulence. The chain is Probable GPI-anchored adhesin-like protein PGA32 (PGA32) from Candida albicans (strain SC5314 / ATCC MYA-2876) (Yeast).